Reading from the N-terminus, the 268-residue chain is Putative sgc region protein SgcQ (268 aa).

It belongs to the BtpA family.

The protein is Putative sgc region protein SgcQ (sgcQ) of Escherichia coli (strain K12).